We begin with the raw amino-acid sequence, 377 residues long: Succinyl-diaminopimelate desuccinylase (377 aa).

Zn(2+) is bound at residue histidine 66. The active site involves aspartate 68. Aspartate 99 contributes to the Zn(2+) binding site. The active-site Proton acceptor is glutamate 133. The Zn(2+) site is built by glutamate 134, glutamate 162, and histidine 348.

It belongs to the peptidase M20A family. DapE subfamily. Homodimer. Requires Zn(2+) as cofactor. Co(2+) is required as a cofactor.

It catalyses the reaction N-succinyl-(2S,6S)-2,6-diaminopimelate + H2O = (2S,6S)-2,6-diaminopimelate + succinate. It participates in amino-acid biosynthesis; L-lysine biosynthesis via DAP pathway; LL-2,6-diaminopimelate from (S)-tetrahydrodipicolinate (succinylase route): step 3/3. Its function is as follows. Catalyzes the hydrolysis of N-succinyl-L,L-diaminopimelic acid (SDAP), forming succinate and LL-2,6-diaminopimelate (DAP), an intermediate involved in the bacterial biosynthesis of lysine and meso-diaminopimelic acid, an essential component of bacterial cell walls. The sequence is that of Succinyl-diaminopimelate desuccinylase from Bordetella avium (strain 197N).